The following is a 152-amino-acid chain: MENNLNLCNQTNYRFRYKKDFQNILDEIALFFKEKLPLELDLNIVDNILIKKISKQYYKKDKETDVLSFPSELANMKNALGFFHIGEIFLNYEKVILQAKEYNHSLKREFCYLFTHGIIHLYGYDHVKENEAKEMNAIVESIMQKLNIKRRK.

Positions 116, 120, and 126 each coordinate Zn(2+).

Belongs to the endoribonuclease YbeY family. Requires Zn(2+) as cofactor.

It is found in the cytoplasm. In terms of biological role, single strand-specific metallo-endoribonuclease involved in late-stage 70S ribosome quality control and in maturation of the 3' terminus of the 16S rRNA. This chain is Endoribonuclease YbeY, found in Mycoplasma mobile (strain ATCC 43663 / 163K / NCTC 11711) (Mesomycoplasma mobile).